Consider the following 155-residue polypeptide: Ribosome maturation factor RimP (155 aa).

It belongs to the RimP family.

It localises to the cytoplasm. Required for maturation of 30S ribosomal subunits. The polypeptide is Ribosome maturation factor RimP (Gemmatimonas aurantiaca (strain DSM 14586 / JCM 11422 / NBRC 100505 / T-27)).